The primary structure comprises 396 residues: NADH-quinone oxidoreductase subunit D 1 (396 aa).

This sequence belongs to the complex I 49 kDa subunit family. As to quaternary structure, NDH-1 is composed of 14 different subunits. Subunits NuoB, C, D, E, F, and G constitute the peripheral sector of the complex.

It localises to the cell inner membrane. It catalyses the reaction a quinone + NADH + 5 H(+)(in) = a quinol + NAD(+) + 4 H(+)(out). Functionally, NDH-1 shuttles electrons from NADH, via FMN and iron-sulfur (Fe-S) centers, to quinones in the respiratory chain. The immediate electron acceptor for the enzyme in this species is believed to be ubiquinone. Couples the redox reaction to proton translocation (for every two electrons transferred, four hydrogen ions are translocated across the cytoplasmic membrane), and thus conserves the redox energy in a proton gradient. The polypeptide is NADH-quinone oxidoreductase subunit D 1 (Rhizobium meliloti (strain 1021) (Ensifer meliloti)).